A 426-amino-acid chain; its full sequence is GATA type zinc finger protein asd-4 (426 aa).

The segment at 16 to 40 (CQNCATSTTPLWRRDEMGQVLCNAC) adopts a GATA-type zinc-finger fold. Disordered stretches follow at residues 70 to 143 (RPDL…NPHI) and 159 to 178 (PGFG…MNGE). Residues 104-113 (PNNPAAAARR) show a composition bias toward low complexity. Polar residues predominate over residues 128–138 (SPVSRTGTPNV). Residues 182–292 (QTHEQLLAAN…QDNGRHKKIR (111 aa)) are a coiled coil. A compositionally biased stretch (low complexity) spans 306–318 (VEPQQPEQQQPAP). The segment at 306 to 426 (VEPQQPEQQQ…PVEEAPKAES (121 aa)) is disordered. A compositionally biased stretch (pro residues) spans 335–353 (APAPAPEAAPEQAPAPAPE). Low complexity predominate over residues 354-419 (PVQEQAQEPE…SEPPTTAPVE (66 aa)).

As to quaternary structure, homotetramer.

The protein localises to the nucleus. In terms of biological role, transcriptional regulator that functions in sexual development; disruption of asd-4 gene results in agenesis of ascus and ascospore with macroscopically normal fruiting body formation. The GATA-type zinc finger domain binds to DNA sequences from its own promoter region. The protein is GATA type zinc finger protein asd-4 (asd-4) of Neurospora crassa (strain ATCC 24698 / 74-OR23-1A / CBS 708.71 / DSM 1257 / FGSC 987).